The following is a 177-amino-acid chain: GTP-dependent dephospho-CoA kinase (177 aa).

Positions 48, 49, 50, 67, 69, and 124 each coordinate GTP.

This sequence belongs to the GTP-dependent DPCK family.

The catalysed reaction is 3'-dephospho-CoA + GTP = GDP + CoA + H(+). Its pathway is cofactor biosynthesis; coenzyme A biosynthesis. Functionally, catalyzes the GTP-dependent phosphorylation of the 3'-hydroxyl group of dephosphocoenzyme A to form coenzyme A (CoA). The protein is GTP-dependent dephospho-CoA kinase of Pyrococcus furiosus (strain ATCC 43587 / DSM 3638 / JCM 8422 / Vc1).